Reading from the N-terminus, the 429-residue chain is TNFAIP3-interacting protein 2 (429 aa).

Position 7 is a phosphoserine (Ser-7). Residues 29-117 (QRLRRLQDQL…MQQLLSQPQH (89 aa)) are a coiled coil. Basic and acidic residues predominate over residues 177 to 195 (HAQRNVGERSPDQSEHTDG). The interval 177-199 (HAQRNVGERSPDQSEHTDGHTSV) is disordered. 2 coiled-coil regions span residues 196 to 226 (HTSVQSVIEKLQEENRLLKQKVTHVEDLNAK) and 255 to 340 (ELMR…QVSW). A ubiquitin-binding domain (UBD) region spans residues 289–347 (RDAALERVQMLEQQILAYKDDFMSERADRERAQSRIQELEEKVASLLHQVSWRQDSREP). Residues 372-400 (PGGWRPGTGSQQPEPPAEGGHPGAAQRGQ) form a disordered region. A compositionally biased stretch (low complexity) spans 388 to 397 (AEGGHPGAAQ). The segment at 397–429 (QRGQGDLQCPHCLQCFSDEQGEELLRHVAECCQ) adopts a CCHC NOA-type zinc-finger fold. 4 residues coordinate Zn(2+): Cys-405, Cys-408, His-423, and Cys-427.

As to quaternary structure, interacts with STK11/LKB1, TNFAIP3, IKBKG, NFKB1, MAP3K8, TEK, RIPK1, CHUK, IKBKB and SMARCD1. Interacts with polyubiquitin. (Microbial infection) Interacts with severe fever with thrombocytopenia syndrome virus (SFTSV) NSs; this interaction promotes TPL2 complex formation and signaling activity leading to IL-10 production. In vitro phosphorylated by CHUK. In terms of processing, ubiquitinated; undergoes 'Lys-48'-linked polyubiquitination probably leading to constitutive proteasomal degradation which can be impaired by IKK-A/CHUK or IKBKB probably involving deubiquitination. Deubiquitinated by USP35; leading to stabilization and inhibition of TNFalpha-induced NF-kappa-B activation. In terms of tissue distribution, ubiquitously expressed in all tissues examined.

It is found in the cytoplasm. Its subcellular location is the nucleus. In terms of biological role, inhibits NF-kappa-B activation by blocking the interaction of RIPK1 with its downstream effector NEMO/IKBKG. Forms a ternary complex with NFKB1 and MAP3K8 but appears to function upstream of MAP3K8 in the TLR4 signaling pathway that regulates MAP3K8 activation. Involved in activation of the MEK/ERK signaling pathway during innate immune response; this function seems to be stimulus- and cell type specific. Required for stability of MAP3K8. Involved in regulation of apoptosis in endothelial cells; promotes TEK agonist-stimulated endothelial survival. May act as transcriptional coactivator when translocated to the nucleus. Enhances CHUK-mediated NF-kappa-B activation involving NF-kappa-B p50-p65 and p50-c-Rel complexes. The polypeptide is TNFAIP3-interacting protein 2 (Homo sapiens (Human)).